The chain runs to 325 residues: uncharacterized protein (325 aa).

2 stretches are compositionally biased toward polar residues: residues 1–21 (MSYQ…SSSA) and 29–57 (EPFS…SSRA). The segment at 1–325 (MSYQQRANDS…LKTGHHSERY (325 aa)) is disordered. Basic and acidic residues predominate over residues 86–109 (ESRKKEQSDVRGGDTSYSRRHDDS). Composition is skewed to polar residues over residues 114-167 (NKYS…TTQG) and 174-193 (YSQS…TPSD). Low complexity-rich tracts occupy residues 200-210 (YDYSSSGSHTH) and 252-278 (ATDT…QRNA). The span at 282–325 (EDEHVSMGDKMKGNMEKMAGKLTRDPELVQKGEDLKTGHHSERY) shows a compositional bias: basic and acidic residues.

This is an uncharacterized protein from Schizosaccharomyces pombe (strain 972 / ATCC 24843) (Fission yeast).